The following is a 583-amino-acid chain: Proteasome-associated ATPase (583 aa).

Residues 2–90 adopt a coiled-coil conformation; sequence ASREDRDAAN…REEVDRLAQP (89 aa). Position 271 to 276 (271 to 276) interacts with ATP; it reads GCGKTL. Residues 582-583 form a docks into pockets in the proteasome alpha-ring region; it reads YL.

This sequence belongs to the AAA ATPase family. In terms of assembly, homohexamer. Assembles into a hexameric ring structure that caps the 20S proteasome core. Strongly interacts with the prokaryotic ubiquitin-like protein Pup through a hydrophobic interface; the interacting region of ARC lies in its N-terminal coiled-coil domain. There is one Pup binding site per ARC hexamer ring. Upon ATP-binding, the C-terminus of ARC interacts with the alpha-rings of the proteasome core, possibly by binding to the intersubunit pockets.

The protein operates within protein degradation; proteasomal Pup-dependent pathway. Functionally, ATPase which is responsible for recognizing, binding, unfolding and translocation of pupylated proteins into the bacterial 20S proteasome core particle. May be essential for opening the gate of the 20S proteasome via an interaction with its C-terminus, thereby allowing substrate entry and access to the site of proteolysis. Thus, the C-termini of the proteasomal ATPase may function like a 'key in a lock' to induce gate opening and therefore regulate proteolysis. The chain is Proteasome-associated ATPase from Acidothermus cellulolyticus (strain ATCC 43068 / DSM 8971 / 11B).